Reading from the N-terminus, the 409-residue chain is Putative competence-damage inducible protein (409 aa).

This sequence belongs to the CinA family.

The sequence is that of Putative competence-damage inducible protein from Clostridium botulinum (strain ATCC 19397 / Type A).